A 355-amino-acid chain; its full sequence is GTPase Obg (355 aa).

One can recognise an Obg domain in the interval 1 to 159 (MKLVDEAEIL…RLLKLELKLL (159 aa)). The 183-residue stretch at 160–342 (ADVGLLGFPN…IMKDVMAFFD (183 aa)) folds into the OBG-type G domain. GTP is bound by residues 166–173 (GFPNAGKS), 191–195 (FTTLY), 213–216 (DVPG), 292–295 (NKAD), and 323–325 (SAL). The Mg(2+) site is built by serine 173 and threonine 193.

Belongs to the TRAFAC class OBG-HflX-like GTPase superfamily. OBG GTPase family. Monomer. It depends on Mg(2+) as a cofactor.

The protein localises to the cytoplasm. Functionally, an essential GTPase which binds GTP, GDP and possibly (p)ppGpp with moderate affinity, with high nucleotide exchange rates and a fairly low GTP hydrolysis rate. Plays a role in control of the cell cycle, stress response, ribosome biogenesis and in those bacteria that undergo differentiation, in morphogenesis control. This chain is GTPase Obg, found in Xanthomonas euvesicatoria pv. vesicatoria (strain 85-10) (Xanthomonas campestris pv. vesicatoria).